A 263-amino-acid polypeptide reads, in one-letter code: Uridylate kinase (263 aa).

Residue 29-32 (KVSG) participates in ATP binding. Glycine 71 is a binding site for UMP. ATP contacts are provided by glycine 72 and arginine 76. Residues aspartate 91 and 152-159 (TGNPFFTT) each bind UMP. Positions 179, 180, 185, and 188 each coordinate ATP.

It belongs to the UMP kinase family. In terms of assembly, homohexamer.

It is found in the cytoplasm. It catalyses the reaction UMP + ATP = UDP + ADP. The protein operates within pyrimidine metabolism; CTP biosynthesis via de novo pathway; UDP from UMP (UMPK route): step 1/1. Its activity is regulated as follows. Inhibited by UTP. Functionally, catalyzes the reversible phosphorylation of UMP to UDP. This chain is Uridylate kinase, found in Maricaulis maris (strain MCS10) (Caulobacter maris).